An 818-amino-acid polypeptide reads, in one-letter code: Histone H2A deubiquitinase MYSM1 (818 aa).

Residues 107-158 form the SANT domain; sequence SSPVKWTKEEKNLFEQGLATFGRRWTSIARLIGSRSVLQVKNYARHYFKNKC. The SWIRM domain maps to 344–442; it reads IKPPDQELEI…FGCEQAIYNR (99 aa). The MPN domain maps to 548 to 680; that stretch reads VKVSCEAMLV…PHPQSQVACL (133 aa). Zn(2+) contacts are provided by histidine 627, histidine 629, and aspartate 640. The JAMM motif motif lies at 627-640; it reads HSHPAFDPNPSIRD. Residues 745-749 carry the LXXLL motif motif; that stretch reads LQKLL.

Belongs to the peptidase M67A family. MYSM1 subfamily.

The protein localises to the nucleus. Functionally, metalloprotease that specifically deubiquitinates monoubiquitinated histone H2A, a specific tag for epigenetic transcriptional repression, thereby acting as a coactivator. Preferentially deubiquitinates monoubiquitinated H2A in hyperacetylated nucleosomes. Deubiquitination of histone H2A leads to facilitate the phosphorylation and dissociation of histone H1 from the nucleosome. Acts as a coactivator by participating in the initiation and elongation steps of androgen receptor (AR)-induced gene activation. The chain is Histone H2A deubiquitinase MYSM1 (mysm1) from Xenopus laevis (African clawed frog).